Consider the following 228-residue polypeptide: Large ribosomal subunit protein uL1 (228 aa).

The protein belongs to the universal ribosomal protein uL1 family. In terms of assembly, part of the 50S ribosomal subunit.

Its function is as follows. Binds directly to 23S rRNA. The L1 stalk is quite mobile in the ribosome, and is involved in E site tRNA release. Functionally, protein L1 is also a translational repressor protein, it controls the translation of the L11 operon by binding to its mRNA. This is Large ribosomal subunit protein uL1 from Clavibacter michiganensis subsp. michiganensis (strain NCPPB 382).